Consider the following 454-residue polypeptide: Metalloprotease MTH_856 (454 aa).

Residues 92–115 (QVGSGAPSVDKTMVRSSRPPSDVP) form a disordered region.

It belongs to the peptidase U62 family.

Its function is as follows. Probable metalloprotease. The protein is Metalloprotease MTH_856 of Methanothermobacter thermautotrophicus (strain ATCC 29096 / DSM 1053 / JCM 10044 / NBRC 100330 / Delta H) (Methanobacterium thermoautotrophicum).